The chain runs to 277 residues: Myelin proteolipid protein (277 aa).

The Cytoplasmic portion of the chain corresponds to 1-10; sequence MGLLECCARC. 3 S-palmitoyl cysteine lipidation sites follow: Cys6, Cys7, and Cys10. The chain crosses the membrane as a helical span at residues 11–36; the sequence is LVGAPFASLVATGLCFFGVALFCGCG. At 37-59 the chain is on the extracellular side; it reads HEALTGTEKLIETYFSKNYQDYE. A helical membrane pass occupies residues 60 to 88; it reads YLINVIHAFQYVIYGTASFFFLYGALLLA. Over 89 to 151 the chain is Cytoplasmic; the sequence is EGFYTTGAVR…LGKWLGHPDK (63 aa). Cys109 carries the S-palmitoyl cysteine lipid modification. Phosphoserine is present on Ser114. A phosphothreonine mark is found at Thr116 and Thr118. S-palmitoyl cysteine attachment occurs at residues Cys139 and Cys141. Residues 152-178 form a helical membrane-spanning segment; sequence FVGITYALTIVWLLVFACSAVPVYIYF. Residues 179–238 are Extracellular-facing; that stretch reads NTWTTCQSIAFPSKTSASIGSLCADARMYGVLPWNAFPGKVCGSNLLSICKTAEFQMTFH. 2 cysteine pairs are disulfide-bonded: Cys184-Cys228 and Cys201-Cys220. Ser199 is lipidated: O-palmitoyl serine. Residues 239–268 form a helical membrane-spanning segment; that stretch reads LFIAAFVGAAATLVSLLTFMIAATYNFAVL. Topologically, residues 269–277 are cytoplasmic; it reads KLMGRGTKF.

This sequence belongs to the myelin proteolipid protein family.

It is found in the cell membrane. The protein resides in the myelin membrane. This is the major myelin protein from the central nervous system. It plays an important role in the formation or maintenance of the multilamellar structure of myelin. In Canis lupus familiaris (Dog), this protein is Myelin proteolipid protein (PLP1).